The sequence spans 441 residues: Ribosomal protein uS12 methylthiotransferase RimO (441 aa).

One can recognise an MTTase N-terminal domain in the interval 8-118 (PKIGFVSLGC…VLEHVHHYSP (111 aa)). Cys-17, Cys-53, Cys-82, Cys-150, Cys-154, and Cys-157 together coordinate [4Fe-4S] cluster. The 238-residue stretch at 136–373 (LTPRHYAYLK…MQLQQQISAE (238 aa)) folds into the Radical SAM core domain. The 66-residue stretch at 376–441 (QEKVGREILV…DEYDLWGTRV (66 aa)) folds into the TRAM domain.

This sequence belongs to the methylthiotransferase family. RimO subfamily. Requires [4Fe-4S] cluster as cofactor.

The protein localises to the cytoplasm. It catalyses the reaction L-aspartate(89)-[ribosomal protein uS12]-hydrogen + (sulfur carrier)-SH + AH2 + 2 S-adenosyl-L-methionine = 3-methylsulfanyl-L-aspartate(89)-[ribosomal protein uS12]-hydrogen + (sulfur carrier)-H + 5'-deoxyadenosine + L-methionine + A + S-adenosyl-L-homocysteine + 2 H(+). Functionally, catalyzes the methylthiolation of an aspartic acid residue of ribosomal protein uS12. The polypeptide is Ribosomal protein uS12 methylthiotransferase RimO (Klebsiella pneumoniae (strain 342)).